Consider the following 140-residue polypeptide: Protein KRTCAP2 homolog (140 aa).

4 helical membrane passes run 11-31 (LLSS…LRFC), 40-60 (LNVL…LTCV), 74-94 (AKLV…AGIV), and 98-118 (CATT…RISI).

Belongs to the KRTCAP2 family. In terms of assembly, component of the oligosaccharyltransferase (OST) complex.

Its subcellular location is the membrane. Functionally, subunit of the oligosaccharyl transferase (OST) complex that catalyzes the initial transfer of a defined glycan (Glc(3)Man(9)GlcNAc(2) in eukaryotes) from the lipid carrier dolichol-pyrophosphate to an asparagine residue within an Asn-X-Ser/Thr consensus motif in nascent polypeptide chains, the first step in protein N-glycosylation. N-glycosylation occurs cotranslationally and the complex associates with the Sec61 complex at the channel-forming translocon complex that mediates protein translocation across the endoplasmic reticulum (ER). All subunits are required for a maximal enzyme activity. In Drosophila pseudoobscura pseudoobscura (Fruit fly), this protein is Protein KRTCAP2 homolog.